Here is a 360-residue protein sequence, read N- to C-terminus: Probable dual-specificity RNA methyltransferase RlmN (360 aa).

Glu97 (proton acceptor) is an active-site residue. The region spanning 103-330 is the Radical SAM core domain; sequence DGDRLTFCIS…TAVRRSRGLD (228 aa). The cysteines at positions 110 and 335 are disulfide-linked. [4Fe-4S] cluster contacts are provided by Cys117, Cys121, and Cys124. Residues 165 to 166, Ser197, 220 to 222, and His292 each bind S-adenosyl-L-methionine; these read GE and SIH. Cys335 functions as the S-methylcysteine intermediate in the catalytic mechanism.

It belongs to the radical SAM superfamily. RlmN family. It depends on [4Fe-4S] cluster as a cofactor.

Its subcellular location is the cytoplasm. It carries out the reaction adenosine(2503) in 23S rRNA + 2 reduced [2Fe-2S]-[ferredoxin] + 2 S-adenosyl-L-methionine = 2-methyladenosine(2503) in 23S rRNA + 5'-deoxyadenosine + L-methionine + 2 oxidized [2Fe-2S]-[ferredoxin] + S-adenosyl-L-homocysteine. It catalyses the reaction adenosine(37) in tRNA + 2 reduced [2Fe-2S]-[ferredoxin] + 2 S-adenosyl-L-methionine = 2-methyladenosine(37) in tRNA + 5'-deoxyadenosine + L-methionine + 2 oxidized [2Fe-2S]-[ferredoxin] + S-adenosyl-L-homocysteine. In terms of biological role, specifically methylates position 2 of adenine 2503 in 23S rRNA and position 2 of adenine 37 in tRNAs. In Gemmatimonas aurantiaca (strain DSM 14586 / JCM 11422 / NBRC 100505 / T-27), this protein is Probable dual-specificity RNA methyltransferase RlmN.